A 315-amino-acid chain; its full sequence is Probable cell division protein WhiA (315 aa).

Residues 274-308 (SLKNLGELIPGGPISKSGINHRLRKLNEIAEKIRA) constitute a DNA-binding region (H-T-H motif).

It belongs to the WhiA family.

In terms of biological role, involved in cell division and chromosome segregation. This chain is Probable cell division protein WhiA, found in Ligilactobacillus salivarius (strain UCC118) (Lactobacillus salivarius).